The sequence spans 237 residues: Uridylate kinase (237 aa).

12-15 (KLSG) provides a ligand contact to ATP. Gly53 provides a ligand contact to UMP. Residues Gly54 and Arg58 each coordinate ATP. Residues Asp73 and 134 to 141 (TGNPYFTT) contribute to the UMP site. ATP is bound by residues Thr161, Tyr167, and Asp170.

It belongs to the UMP kinase family. As to quaternary structure, homohexamer.

Its subcellular location is the cytoplasm. It carries out the reaction UMP + ATP = UDP + ADP. The protein operates within pyrimidine metabolism; CTP biosynthesis via de novo pathway; UDP from UMP (UMPK route): step 1/1. Its activity is regulated as follows. Inhibited by UTP. Catalyzes the reversible phosphorylation of UMP to UDP. The chain is Uridylate kinase from Rhizorhabdus wittichii (strain DSM 6014 / CCUG 31198 / JCM 15750 / NBRC 105917 / EY 4224 / RW1) (Sphingomonas wittichii).